The sequence spans 1192 residues: Protein FAM83H (1192 aa).

Disordered regions lie at residues 435 to 542, 557 to 661, 695 to 720, 737 to 1082, and 1094 to 1145; these read EGMG…VKQG, DGGE…LAEP, SKLEQHNSSQAKSGGELQEEKEESEP, LSRE…SNII, and ILEQ…ERDN. Residues 437–447 are compositionally biased toward basic and acidic residues; the sequence is MGHDDRGHYDR. Composition is skewed to polar residues over residues 523–538 and 629–652; these read QLFSTGDQVRQSQDPS and SDLGPTSTDTLKPAISASSLASST. Composition is skewed to basic and acidic residues over residues 737-759 and 768-789; these read LSREPFDWNKHKKADEKDVKHAS and DTKEEPIKEKEKPDNPKPEENK. Positions 790–810 are enriched in polar residues; sequence VTQPTVPSASQQITSSLNMND. Positions 820 to 834 are enriched in basic and acidic residues; it reads DQQEKRKTSKLELDL. Positions 861–878 are enriched in polar residues; sequence TSEQSTVKAQEPTVSQTD. 2 stretches are compositionally biased toward basic and acidic residues: residues 880–892 and 914–925; these read VPHRPVIETKPKP and APKKEPVKEPTK. The segment covering 926-946 has biased composition (low complexity); sequence SLKPFPSPKFLKPFKSSQSSS. Residues 994-1005 are compositionally biased toward basic and acidic residues; it reads ESKDTKALDFLK. Over residues 1068 to 1082 the composition is skewed to polar residues; that stretch reads KPTTSRYQSSTSNII. Residues 1107–1122 are compositionally biased toward basic and acidic residues; it reads QQNEESGKGDGGKDDV.

This sequence belongs to the FAM83 family.

The protein localises to the cytoplasm. The protein resides in the cytoskeleton. May play a role in keratin cytoskeleton disassembly. This chain is Protein FAM83H, found in Danio rerio (Zebrafish).